A 34-amino-acid polypeptide reads, in one-letter code: Corticostatin-6 (34 aa).

3 disulfide bridges follow: Cys3-Cys31, Cys5-Cys20, and Cys10-Cys30.

Belongs to the alpha-defensin family. In terms of tissue distribution, lung, spleen, small intestine, pituitary gland, adrenal medulla and plasma.

It localises to the secreted. Functionally, microbicidal activity and inhibits corticotropin (ACTH) stimulated corticosterone production. The sequence is that of Corticostatin-6 from Oryctolagus cuniculus (Rabbit).